The chain runs to 314 residues: 4-hydroxyproline 2-epimerase (314 aa).

Cysteine 88 serves as the catalytic Proton acceptor. Residues 89-90 (GH), histidine 208, and aspartate 232 contribute to the substrate site. Cysteine 236 acts as the Proton donor in catalysis. 237–238 (GT) lines the substrate pocket.

It belongs to the proline racemase family. Homodimer.

It carries out the reaction trans-4-hydroxy-L-proline = cis-4-hydroxy-D-proline. Inhibited by iodoacetate, iodoacetamide and by high amounts (10 mM) of pyrrole-2-carboxylate (PYC). Not inhibited by PYC at 1 mM. In terms of biological role, allows intracellular utilization of 4-hydroxyproline, one of the major constituents of host collagen, by converting trans-4-hydroxy-L-proline (t4LHyp) to cis-4-hydroxy-D-proline (c4DHyp), which can be further metabolized by intracellular 4-hydroxy-D-proline oxidases. Strong B-cell mitogen. Plays an important role in the regulation of intra- and extracellular amino acid pools, allowing the bacterium to profit from host precursors and enzymatic pathways. Cannot use L-proline, trans-3-hydroxy-L-proline (t3LHyp) and pyrrolidone-5-carboxylate (P5C) as substrate. This is 4-hydroxyproline 2-epimerase from Pseudomonas aeruginosa (strain ATCC 15692 / DSM 22644 / CIP 104116 / JCM 14847 / LMG 12228 / 1C / PRS 101 / PAO1).